The primary structure comprises 155 residues: UPF0178 protein Gmet_1725 (155 aa).

The protein belongs to the UPF0178 family.

In Geobacter metallireducens (strain ATCC 53774 / DSM 7210 / GS-15), this protein is UPF0178 protein Gmet_1725.